We begin with the raw amino-acid sequence, 94 residues long: Co-chaperonin GroES (94 aa).

The protein belongs to the GroES chaperonin family. Heptamer of 7 subunits arranged in a ring. Interacts with the chaperonin GroEL.

Its subcellular location is the cytoplasm. Functionally, together with the chaperonin GroEL, plays an essential role in assisting protein folding. The GroEL-GroES system forms a nano-cage that allows encapsulation of the non-native substrate proteins and provides a physical environment optimized to promote and accelerate protein folding. GroES binds to the apical surface of the GroEL ring, thereby capping the opening of the GroEL channel. In Lactobacillus gasseri (strain ATCC 33323 / DSM 20243 / BCRC 14619 / CIP 102991 / JCM 1131 / KCTC 3163 / NCIMB 11718 / NCTC 13722 / AM63), this protein is Co-chaperonin GroES.